The following is a 250-amino-acid chain: Uracil-DNA glycosylase (250 aa).

D78 (proton acceptor) is an active-site residue.

This sequence belongs to the uracil-DNA glycosylase (UDG) superfamily. UNG family.

The protein resides in the cytoplasm. The enzyme catalyses Hydrolyzes single-stranded DNA or mismatched double-stranded DNA and polynucleotides, releasing free uracil.. Functionally, excises uracil residues from the DNA which can arise as a result of misincorporation of dUMP residues by DNA polymerase or due to deamination of cytosine. The sequence is that of Uracil-DNA glycosylase from Albidiferax ferrireducens (strain ATCC BAA-621 / DSM 15236 / T118) (Rhodoferax ferrireducens).